A 588-amino-acid polypeptide reads, in one-letter code: Ribonuclease Y (588 aa).

The helical transmembrane segment at 7–27 (VLLVAVLLLALIVLGAVLVGV) threads the bilayer. Positions 130–162 (ARRSGEREAAVLATTTREQAAEVERRAARMDDR) are disordered. Residues 148-162 (QAAEVERRAARMDDR) are compositionally biased toward basic and acidic residues. The 82-residue stretch at 278 to 359 (VVSVLHLPGD…HRIEEVHDLA (82 aa)) folds into the KH domain. The region spanning 404 to 497 (VLKHLVETAH…TQASDACSGG (94 aa)) is the HD domain.

The protein belongs to the RNase Y family.

The protein localises to the cell membrane. In terms of biological role, endoribonuclease that initiates mRNA decay. The protein is Ribonuclease Y of Salinispora arenicola (strain CNS-205).